The following is a 362-amino-acid chain: Ferredoxin--NADP reductase, leaf isozyme 1, chloroplastic (362 aa).

The N-terminal 62 residues, 1–62 (MAAVTAAAVS…DAAAVAAAPA (62 aa)), are a transit peptide targeting the chloroplast. Positions 83-205 (KEPYVGKCLL…TGPVGKEMLM (123 aa)) constitute an FAD-binding FR-type domain. Residues 141-144 (RLYS), 162-164 (CVK), Y168, 179-181 (VCS), and T220 contribute to the FAD site. NADP(+)-binding residues include S144 and K164. A disulfide bridge connects residues C180 and C185. Residue S181 is modified to Phosphoserine. NADP(+) is bound by residues T220, 252–253 (VP), 282–283 (SR), K292, 321–322 (GL), and E360.

Belongs to the ferredoxin--NADP reductase type 1 family. In terms of assembly, component of high molecular weight thylakoid LFNRs-containing protein complexes containing LIR1, LFNR1, LFNR2, TIC62 and TROL proteins. Interacts directly with LIR1 and TIC62; LIR1 increases the affinity of LFNR1 and LFNR2 for TIC62. The cofactor is FAD. Post-translationally, may form interchain disulfide bonds with LIR1.

Its subcellular location is the plastid. It localises to the chloroplast stroma. The protein resides in the chloroplast thylakoid membrane. It carries out the reaction 2 reduced [2Fe-2S]-[ferredoxin] + NADP(+) + H(+) = 2 oxidized [2Fe-2S]-[ferredoxin] + NADPH. It functions in the pathway energy metabolism; photosynthesis. Functionally, may play a key role in regulating the relative amounts of cyclic and non-cyclic electron flow to meet the demands of the plant for ATP and reducing power. This Oryza sativa subsp. japonica (Rice) protein is Ferredoxin--NADP reductase, leaf isozyme 1, chloroplastic.